The sequence spans 1369 residues: Phosphoribosylformylglycinamidine synthase (1369 aa).

2 disordered regions span residues 321-352 (HPTA…AKPK) and 373-400 (ENAR…KPDR). 330–341 (GASTGAGGEIRD) lines the ATP pocket. ATP is bound at residue A721. Residues D722, E761, N765, and D934 each coordinate Mg(2+). S936 contacts ATP. Residues 1116–1369 (MAILREQGVN…MFRNARKQMG (254 aa)) enclose the Glutamine amidotransferase type-1 domain. Residue C1209 is the Nucleophile of the active site. Catalysis depends on residues H1330 and E1332.

In the N-terminal section; belongs to the FGAMS family. As to quaternary structure, monomer.

Its subcellular location is the cytoplasm. The enzyme catalyses N(2)-formyl-N(1)-(5-phospho-beta-D-ribosyl)glycinamide + L-glutamine + ATP + H2O = 2-formamido-N(1)-(5-O-phospho-beta-D-ribosyl)acetamidine + L-glutamate + ADP + phosphate + H(+). It participates in purine metabolism; IMP biosynthesis via de novo pathway; 5-amino-1-(5-phospho-D-ribosyl)imidazole from N(2)-formyl-N(1)-(5-phospho-D-ribosyl)glycinamide: step 1/2. Its function is as follows. Phosphoribosylformylglycinamidine synthase involved in the purines biosynthetic pathway. Catalyzes the ATP-dependent conversion of formylglycinamide ribonucleotide (FGAR) and glutamine to yield formylglycinamidine ribonucleotide (FGAM) and glutamate. The polypeptide is Phosphoribosylformylglycinamidine synthase (Ralstonia nicotianae (strain ATCC BAA-1114 / GMI1000) (Ralstonia solanacearum)).